Consider the following 422-residue polypeptide: Metallocarboxypeptidase A (422 aa).

Positions 1-17 (MRSVLSLALLAANVVTA) are cleaved as a signal peptide. Positions 18 to 112 (AVVSPFDYSG…FEAYSAGYAP (95 aa)) are cleaved as a propeptide — activation peptide. In terms of domain architecture, Peptidase M14 spans 119 to 419 (SYHSYQDHIS…AGTVAMLKAV (301 aa)). Zn(2+)-binding residues include His179 and Glu182. Substrate is bound by residues 179–182 (HARE), Arg237, and 254–255 (NR). Residues Cys248 and Cys271 are joined by a disulfide bond. His309 contributes to the Zn(2+) binding site. Residue 310-311 (SY) coordinates substrate. The Proton donor/acceptor role is filled by Glu385.

It belongs to the peptidase M14 family. The cofactor is Zn(2+).

The protein resides in the secreted. Extracellular metalloprotease that contributes to pathogenicity. The sequence is that of Metallocarboxypeptidase A (MCPA) from Trichophyton equinum (Horse ringworm fungus).